The primary structure comprises 59 residues: Cecropin-C type 2 (59 aa).

The N-terminal stretch at 1–23 (MNFAKVFVLVAMAVLLLVGQSEA) is a signal peptide.

It belongs to the cecropin family.

Its subcellular location is the secreted. Functionally, cecropins have lytic and antibacterial activity against several Gram-positive and Gram-negative bacteria. This Aedes albopictus (Asian tiger mosquito) protein is Cecropin-C type 2 (CECC2).